Reading from the N-terminus, the 160-residue chain is SsrA-binding protein (160 aa).

The segment at 133–160 is disordered; that stretch reads GKKLHDKRDTEKERDWKREQQRLLRDRG. Residues 138–160 show a composition bias toward basic and acidic residues; it reads DKRDTEKERDWKREQQRLLRDRG.

It belongs to the SmpB family.

It localises to the cytoplasm. In terms of biological role, required for rescue of stalled ribosomes mediated by trans-translation. Binds to transfer-messenger RNA (tmRNA), required for stable association of tmRNA with ribosomes. tmRNA and SmpB together mimic tRNA shape, replacing the anticodon stem-loop with SmpB. tmRNA is encoded by the ssrA gene; the 2 termini fold to resemble tRNA(Ala) and it encodes a 'tag peptide', a short internal open reading frame. During trans-translation Ala-aminoacylated tmRNA acts like a tRNA, entering the A-site of stalled ribosomes, displacing the stalled mRNA. The ribosome then switches to translate the ORF on the tmRNA; the nascent peptide is terminated with the 'tag peptide' encoded by the tmRNA and targeted for degradation. The ribosome is freed to recommence translation, which seems to be the essential function of trans-translation. The sequence is that of SsrA-binding protein from Rhizorhabdus wittichii (strain DSM 6014 / CCUG 31198 / JCM 15750 / NBRC 105917 / EY 4224 / RW1) (Sphingomonas wittichii).